The sequence spans 230 residues: 7-cyano-7-deazaguanine synthase (230 aa).

Cys-7 to Ala-17 lines the ATP pocket. The Zn(2+) site is built by Cys-185, Cys-193, Cys-196, and Cys-199.

The protein belongs to the QueC family. Zn(2+) is required as a cofactor.

The enzyme catalyses 7-carboxy-7-deazaguanine + NH4(+) + ATP = 7-cyano-7-deazaguanine + ADP + phosphate + H2O + H(+). It functions in the pathway purine metabolism; 7-cyano-7-deazaguanine biosynthesis. Catalyzes the ATP-dependent conversion of 7-carboxy-7-deazaguanine (CDG) to 7-cyano-7-deazaguanine (preQ(0)). This Ruegeria pomeroyi (strain ATCC 700808 / DSM 15171 / DSS-3) (Silicibacter pomeroyi) protein is 7-cyano-7-deazaguanine synthase.